Consider the following 180-residue polypeptide: Beta-lactoglobulin-1 (180 aa).

A signal peptide spans 1-18 (MKCLLLALGLALMCGIQA). Disulfide bonds link cysteine 84/cysteine 178 and cysteine 124/cysteine 137.

Belongs to the calycin superfamily. Lipocalin family. Monomer.

The protein localises to the secreted. Functionally, lactoglobulin is the primary component of whey, it binds retinol and is probably involved in the transport of that molecule. This is Beta-lactoglobulin-1 (LGB1) from Equus caballus (Horse).